The chain runs to 231 residues: MDQSIQVNINEVNQALERKDSLDVIKWAYKTYGDKLVYACSMGAEGMVLIDLISKVRPDAPVIFLDTDFHFSETYELIERVKERYPKLQLKLVKPELTPEEQAETYGDRLWERQPDLCCKLRKLVPLEKELAQYDAWMSGLRRDQSPTRTNTQFVNEDRRFGSTKICPLIHWTSEEIWMYIELHQLPYNDLHDKQYPSIGCEYCTRPVKEGEDERAGRWSNTSKTECGLHQ.

[4Fe-4S] cluster-binding residues include cysteine 118, cysteine 119, cysteine 201, and cysteine 204. The Nucleophile; cysteine thiosulfonate intermediate role is filled by cysteine 227.

The protein belongs to the PAPS reductase family. CysH subfamily. [4Fe-4S] cluster serves as cofactor.

Its subcellular location is the cytoplasm. It catalyses the reaction [thioredoxin]-disulfide + sulfite + AMP + 2 H(+) = adenosine 5'-phosphosulfate + [thioredoxin]-dithiol. It functions in the pathway sulfur metabolism; hydrogen sulfide biosynthesis; sulfite from sulfate. Functionally, catalyzes the formation of sulfite from adenosine 5'-phosphosulfate (APS) using thioredoxin as an electron donor. This chain is Adenosine 5'-phosphosulfate reductase, found in Halalkalibacterium halodurans (strain ATCC BAA-125 / DSM 18197 / FERM 7344 / JCM 9153 / C-125) (Bacillus halodurans).